The primary structure comprises 398 residues: tRNA(Ile)-lysidine synthase (398 aa).

Residue 25-30 (SGGVDS) participates in ATP binding.

Belongs to the tRNA(Ile)-lysidine synthase family.

The protein localises to the cytoplasm. The enzyme catalyses cytidine(34) in tRNA(Ile2) + L-lysine + ATP = lysidine(34) in tRNA(Ile2) + AMP + diphosphate + H(+). Functionally, ligates lysine onto the cytidine present at position 34 of the AUA codon-specific tRNA(Ile) that contains the anticodon CAU, in an ATP-dependent manner. Cytidine is converted to lysidine, thus changing the amino acid specificity of the tRNA from methionine to isoleucine. The protein is tRNA(Ile)-lysidine synthase of Francisella tularensis subsp. tularensis (strain SCHU S4 / Schu 4).